A 222-amino-acid polypeptide reads, in one-letter code: Flagellin B5 (222 aa).

The propeptide occupies 1–4 (MRRG).

Belongs to the archaeal flagellin family.

Its subcellular location is the archaeal flagellum. Functionally, flagellin is the subunit protein which polymerizes to form the filaments of archaeal flagella. In Pyrococcus abyssi (strain GE5 / Orsay), this protein is Flagellin B5 (flaB5).